The primary structure comprises 170 residues: Cathelicidin antimicrobial peptide (170 aa).

An N-terminal signal peptide occupies residues 1-30; the sequence is MKTQRDSPSLGRWSLVLLLLGLVMPLAIVA. Positions 31-131 are cleaved as a propeptide — cathelin-like domain (CLD); it reads QVLSYQEAVL…DISCDKDNRR (101 aa). 2 disulfides stabilise this stretch: cysteine 86/cysteine 97 and cysteine 108/cysteine 125. Residues 150–162 are active core; sequence FKRIVQRIKDFLQ.

This sequence belongs to the cathelicidin family. As to quaternary structure, monomer, homodimer or homotrimer (in vitro). Oligomerizes as tetra- or hexamer in solution (in vitro). Proteolytically cleaved by proteinase PRTN3 into antibacterial peptide LL-37. Proteolytically cleaved by cathepsin CTSG and neutrophil elastase ELANE. In terms of processing, resistant to proteolytic degradation in solution, and when bound to both zwitterionic (mimicking mammalian membranes) and negatively charged membranes (mimicking bacterial membranes). Post-translationally, after secretion onto the skin surface, the CAMP gene product is processed by a serine protease-dependent mechanism into multiple novel antimicrobial peptides distinct from and shorter than cathelicidin LL-37. These peptides show enhanced antimicrobial action, acquiring the ability to kill skin pathogens such as S.aureus, E.coli and C.albicans. These peptides have lost the ability to stimulate CXCL8/IL8 release from keratinocytes. The peptides act synergistically, killing bacteria at lower concentrations when present together, and maintain activity at increased salt condition.

Its subcellular location is the secreted. It localises to the vesicle. Antimicrobial protein that is an integral component of the innate immune system. Binds to bacterial lipopolysaccharides (LPS). Acts via neutrophil N-formyl peptide receptors to enhance the release of CXCL2. Postsecretory processing generates multiple cathelicidin antimicrobial peptides with various lengths which act as a topical antimicrobial defense in sweat on skin. The unprocessed precursor form, cathelicidin antimicrobial peptide, inhibits the growth of Gram-negative E.coli and E.aerogenes with efficiencies comparable to that of the mature peptide LL-37 (in vitro). Functionally, antimicrobial peptide that is an integral component of the innate immune system. Binds to bacterial lipopolysaccharides (LPS). Causes membrane permeabilization by forming transmembrane pores (in vitro). Causes lysis of E.coli. Exhibits antimicrobial activity against Gram-negative bacteria such as P.aeruginosa, S.typhimurium, E.aerogenes, E.coli and P.syringae, Gram-positive bacteria such as L.monocytogenes, S.epidermidis, S.pyogenes and S.aureus, as well as vancomycin-resistant enterococci (in vitro). Exhibits antimicrobial activity against methicillin-resistant S.aureus, P.mirabilis, and C.albicans in low-salt media, but not in media containing 100 mM NaCl (in vitro). Forms chiral supramolecular assemblies with quinolone signal (PQS) molecules of P.aeruginosa, which may lead to interference of bacterial quorum signaling and perturbance of bacterial biofilm formation. May form supramolecular fiber-like assemblies on bacterial membranes. Induces cytokine and chemokine producation as well as TNF/TNFA and CSF2/GMCSF production in normal human keratinocytes. Exhibits hemolytic activity against red blood cells. Its function is as follows. Exhibits antimicrobial activity against E.coli and B.megaterium (in vitro). This is Cathelicidin antimicrobial peptide from Nomascus concolor (Black crested gibbon).